The sequence spans 427 residues: 3-phosphoshikimate 1-carboxyvinyltransferase (427 aa).

3-phosphoshikimate-binding residues include Lys22, Ser23, and Arg27. Phosphoenolpyruvate is bound at residue Lys22. Phosphoenolpyruvate-binding residues include Gly96 and Arg124. The 3-phosphoshikimate site is built by Ser169, Ser170, Gln171, Ser197, Asp313, Asn336, and Lys340. Position 171 (Gln171) interacts with phosphoenolpyruvate. The active-site Proton acceptor is the Asp313. The phosphoenolpyruvate site is built by Arg344, Arg386, and Lys411.

Belongs to the EPSP synthase family. Monomer.

The protein resides in the cytoplasm. It catalyses the reaction 3-phosphoshikimate + phosphoenolpyruvate = 5-O-(1-carboxyvinyl)-3-phosphoshikimate + phosphate. Its pathway is metabolic intermediate biosynthesis; chorismate biosynthesis; chorismate from D-erythrose 4-phosphate and phosphoenolpyruvate: step 6/7. Functionally, catalyzes the transfer of the enolpyruvyl moiety of phosphoenolpyruvate (PEP) to the 5-hydroxyl of shikimate-3-phosphate (S3P) to produce enolpyruvyl shikimate-3-phosphate and inorganic phosphate. The sequence is that of 3-phosphoshikimate 1-carboxyvinyltransferase from Escherichia coli O9:H4 (strain HS).